Here is a 299-residue protein sequence, read N- to C-terminus: Cold shock protein 1 (299 aa).

Ala2 carries the N-acetylalanine modification. The region spanning 12–76 is the CSD domain; it reads TGKVNWFNAS…GKTKAVNVTA (65 aa). Positions 76–97 are disordered; sequence APGGGSLKKENNSRGNGARRGG. 7 consecutive CCHC-type zinc fingers follow at residues 100-117, 132-149, 164-181, 198-215, 230-247, 253-270, and 280-297; these read SGCYNCGELGHISKDCGI, EGCYNCGDTGHFARDCTS, DGCYTCGDVGHVARDCTQ, DGCYTCGDVGHFARDCTQ, GTCYSCGGVGHIARDCAT, RGCYQCGGSGHLARDCDQ, and NACYKCGKEGHFARECSS.

This sequence belongs to the cold shock protein (CSP) family. As to expression, mostly expressed in shoot apices and siliques, and, to a lower extent, in roots, cotyledons, stems, shoots, leaves, floral buds and flowers.

It is found in the nucleus. It localises to the cytoplasm. Chaperone that binds to RNA, single- (ssDNA) and double-stranded (dsDNA) DNA, and unwinds nucleic acid duplex. Exhibits a DNA melting activity. May be involved in cold resistance. Prevents seed germination under dehydration or salt stress conditions. The polypeptide is Cold shock protein 1 (CSP1) (Arabidopsis thaliana (Mouse-ear cress)).